The following is a 226-amino-acid chain: Enolase-phosphatase E1 (226 aa).

Mg(2+)-binding residues include D9 and E11. Substrate contacts are provided by residues 115–116 (SS) and K160. D185 is a Mg(2+) binding site.

The protein belongs to the HAD-like hydrolase superfamily. MasA/MtnC family. Monomer. The cofactor is Mg(2+).

The protein localises to the cytoplasm. It localises to the nucleus. It carries out the reaction 5-methylsulfanyl-2,3-dioxopentyl phosphate + H2O = 1,2-dihydroxy-5-(methylsulfanyl)pent-1-en-3-one + phosphate. It functions in the pathway amino-acid biosynthesis; L-methionine biosynthesis via salvage pathway; L-methionine from S-methyl-5-thio-alpha-D-ribose 1-phosphate: step 3/6. The protein operates within amino-acid biosynthesis; L-methionine biosynthesis via salvage pathway; L-methionine from S-methyl-5-thio-alpha-D-ribose 1-phosphate: step 4/6. Bifunctional enzyme that catalyzes the enolization of 2,3-diketo-5-methylthiopentyl-1-phosphate (DK-MTP-1-P) into the intermediate 2-hydroxy-3-keto-5-methylthiopentenyl-1-phosphate (HK-MTPenyl-1-P), which is then dephosphorylated to form the acireductone 1,2-dihydroxy-3-keto-5-methylthiopentene (DHK-MTPene). The protein is Enolase-phosphatase E1 of Zygosaccharomyces rouxii (strain ATCC 2623 / CBS 732 / NBRC 1130 / NCYC 568 / NRRL Y-229).